Consider the following 431-residue polypeptide: MAVSAVPHPSKQAQASEEGINQEKCINEEYKIWKKNSPFLYDLIITRALEWPCMSLQWYPEQQIFAEHGYTEQKMFLGVRADVGKYLLAVASIQLPYLNQTVPPTTMEGASAGDESSLRVNISNLYSHPESVCSAKLMPQDDSCVATVGNYHNDVLVFDKESFESYSSASESPLKPKYRLTKHTQPCTSVCWNFLSKGTLVSGSQDATLSCWDLNAYNESDSASVLKVHISSHEKQVSDVRFHYKHQDLLASVSYDQYLHVHDIRRPDASTKPARSVHAHSGPIHSVAFNPHNDFILATCSTDKTIALWDLRNLNQRLHTLEGHEDIVTKISFSPHEEPILASTSADRRTLVWDLSRIGEDQPAEEAQDGPPELLFMHGGHTSCTIDMDWCPNYNWTMATAAEDNILQIWTPSRSIWGNEQLEEDATAYLS.

WD repeat units follow at residues S127 to D159, K182 to D213, S232 to D263, A279 to D310, G323 to D354, and G380 to T411.

Belongs to the WD repeat HIR1 family. As to quaternary structure, heterotetramer of alp13, clr6, prw1 and pst2.

Its subcellular location is the nucleus. Its function is as follows. Has a role in chromatin assembly and chromosome segregation. Involved in the deacetylation of histones. In Schizosaccharomyces pombe (strain 972 / ATCC 24843) (Fission yeast), this protein is RbAp48-related WD40 repeat-containing protein prw1 (prw1).